Reading from the N-terminus, the 293-residue chain is Small ribosomal subunit biogenesis GTPase RsgA (293 aa).

The 161-residue stretch at 63–223 (KNWLVRPPIA…VADTPGFSAL (161 aa)) folds into the CP-type G domain. Residues 112-115 (NKMD) and 166-174 (GQSGVGKSS) contribute to the GTP site. Positions 247, 252, 254, and 260 each coordinate Zn(2+).

This sequence belongs to the TRAFAC class YlqF/YawG GTPase family. RsgA subfamily. Monomer. Associates with 30S ribosomal subunit, binds 16S rRNA. Zn(2+) is required as a cofactor.

It is found in the cytoplasm. One of several proteins that assist in the late maturation steps of the functional core of the 30S ribosomal subunit. Helps release RbfA from mature subunits. May play a role in the assembly of ribosomal proteins into the subunit. Circularly permuted GTPase that catalyzes slow GTP hydrolysis, GTPase activity is stimulated by the 30S ribosomal subunit. The protein is Small ribosomal subunit biogenesis GTPase RsgA of Geobacillus sp. (strain WCH70).